The primary structure comprises 346 residues: Phosphoribosylformylglycinamidine cyclo-ligase (346 aa).

It belongs to the AIR synthase family.

The protein resides in the cytoplasm. It catalyses the reaction 2-formamido-N(1)-(5-O-phospho-beta-D-ribosyl)acetamidine + ATP = 5-amino-1-(5-phospho-beta-D-ribosyl)imidazole + ADP + phosphate + H(+). It participates in purine metabolism; IMP biosynthesis via de novo pathway; 5-amino-1-(5-phospho-D-ribosyl)imidazole from N(2)-formyl-N(1)-(5-phospho-D-ribosyl)glycinamide: step 2/2. The polypeptide is Phosphoribosylformylglycinamidine cyclo-ligase (Bacillus thuringiensis subsp. konkukian (strain 97-27)).